Reading from the N-terminus, the 421-residue chain is C2 calcium-dependent domain-containing protein 4C (421 aa).

Disordered stretches follow at residues Arg-13–Ala-97, Asp-119–Ser-140, His-158–Gly-228, and Val-250–Val-303. A compositionally biased stretch (polar residues) spans Glu-215–Gly-228. A phosphoserine mark is found at Ser-262, Ser-264, and Ser-273. A C2 domain is found at Pro-305–Leu-421.

It belongs to the C2CD4 family.

This Homo sapiens (Human) protein is C2 calcium-dependent domain-containing protein 4C (C2CD4C).